We begin with the raw amino-acid sequence, 303 residues long: Large ribosomal subunit protein uL1m (303 aa).

The protein belongs to the universal ribosomal protein uL1 family. As to quaternary structure, component of the mitochondrial large ribosomal subunit (mt-LSU). Mature N.crassa 74S mitochondrial ribosomes consist of a small (37S) and a large (54S) subunit. The 37S small subunit contains a 16S ribosomal RNA (16S mt-rRNA) and 32 different proteins. The 54S large subunit contains a 23S rRNA (23S mt-rRNA) and 42 different proteins.

It is found in the mitochondrion. Functionally, component of the mitochondrial ribosome (mitoribosome), a dedicated translation machinery responsible for the synthesis of mitochondrial genome-encoded proteins, including at least some of the essential transmembrane subunits of the mitochondrial respiratory chain. The mitoribosomes are attached to the mitochondrial inner membrane and translation products are cotranslationally integrated into the membrane. The chain is Large ribosomal subunit protein uL1m (mrpl1) from Neurospora crassa (strain ATCC 24698 / 74-OR23-1A / CBS 708.71 / DSM 1257 / FGSC 987).